Here is a 154-residue protein sequence, read N- to C-terminus: Proteinase inhibitor type-2 P303.51 (154 aa).

The N-terminal stretch at 1–25 (MAVHKEVNFVAYLLIVLGLLVLVSA) is a signal peptide. 2 tandem repeats follow at residues 31–87 (AKAC…DPKK) and 88–147 (PKAC…DEPK). 8 disulfide bridges follow: cysteine 34/cysteine 122, cysteine 38/cysteine 118, cysteine 46/cysteine 128, cysteine 58/cysteine 95, cysteine 61/cysteine 79, cysteine 62/cysteine 91, cysteine 68/cysteine 104, and cysteine 121/cysteine 139.

Belongs to the protease inhibitor I20 (potato type II proteinase inhibitor) family.

The sequence is that of Proteinase inhibitor type-2 P303.51 from Solanum tuberosum (Potato).